The chain runs to 257 residues: LexA repressor (257 aa).

Positions phenylalanine 64 to glutamine 84 form a DNA-binding region, H-T-H motif. Residues serine 181 and lysine 218 each act as for autocatalytic cleavage activity in the active site.

This sequence belongs to the peptidase S24 family. As to quaternary structure, homodimer.

It catalyses the reaction Hydrolysis of Ala-|-Gly bond in repressor LexA.. Functionally, represses a number of genes involved in the response to DNA damage (SOS response), including recA and lexA. In the presence of single-stranded DNA, RecA interacts with LexA causing an autocatalytic cleavage which disrupts the DNA-binding part of LexA, leading to derepression of the SOS regulon and eventually DNA repair. The sequence is that of LexA repressor from Bifidobacterium adolescentis (strain ATCC 15703 / DSM 20083 / NCTC 11814 / E194a).